Reading from the N-terminus, the 329-residue chain is Glutamine synthetase (329 aa).

In terms of domain architecture, GS beta-grasp spans 4–86 (YKLEYIWLDA…VMCEVMMPDA (83 aa)). Residues 89–329 (PHASNTRATV…GDPYQMLLSS (241 aa)) enclose the GS catalytic domain. Residues glutamate 109 and glutamate 111 each contribute to the Mg(2+) site. Position 167 (glutamate 167) interacts with ATP. The Mg(2+) site is built by glutamate 172 and glutamate 179. Glutamate 278 is a binding site for L-glutamate.

The protein belongs to the glutamine synthetase family. Homooctamer and homotetramer. The cofactor is Mg(2+).

The protein localises to the cytoplasm. The catalysed reaction is L-glutamate + NH4(+) + ATP = L-glutamine + ADP + phosphate + H(+). Functionally, catalyzes the ATP-dependent biosynthesis of glutamine from glutamate and ammonia. This chain is Glutamine synthetase, found in Rhizobium meliloti (Ensifer meliloti).